The following is a 392-amino-acid chain: O-phospho-L-seryl-tRNA:Cys-tRNA synthase 1 (392 aa).

Residues 85–86 (AR), Asn190, and 213–215 (SGH) contribute to the pyridoxal 5'-phosphate site. An N6-(pyridoxal phosphate)lysine modification is found at Lys216.

Belongs to the SepCysS family. As to quaternary structure, homodimer. Interacts with SepRS. The cofactor is pyridoxal 5'-phosphate.

The catalysed reaction is O-phospho-L-seryl-tRNA(Cys) + hydrogen sulfide + H(+) = L-cysteinyl-tRNA(Cys) + phosphate. Converts O-phospho-L-seryl-tRNA(Cys) (Sep-tRNA(Cys)) to L-cysteinyl-tRNA(Cys) (Cys-tRNA(Cys)). This Methanocorpusculum labreanum (strain ATCC 43576 / DSM 4855 / Z) protein is O-phospho-L-seryl-tRNA:Cys-tRNA synthase 1.